The chain runs to 481 residues: Serralysin B (481 aa).

The propeptide occupies 1–15 (MQQNEKASLNTSAAA). Residue His-189 participates in Zn(2+) binding. Residue Glu-190 is part of the active site. Residues His-193 and Tyr-230 each coordinate Zn(2+). Ca(2+)-binding residues include Arg-267, Gly-269, Thr-271, Asp-299, Gly-301, Gly-302, Asp-304, Thr-341, Glu-343, Gly-348, Gly-350, Asp-352, Asn-357, Ala-359, Asn-361, Gly-365, Gly-366, Ala-367, Gly-368, Asp-370, Gly-374, Gly-377, Asp-379, Gly-383, Gly-384, Ala-385, Gly-386, Asp-388, Asp-397, Asp-404, and Asp-414. Hemolysin-type calcium-binding repeat units follow at residues 346 to 363 (IGGS…DNIL), 364 to 381 (QGGA…ADTL), and 382 to 399 (TGGA…QDST).

The protein belongs to the peptidase M10B family. Ca(2+) serves as cofactor. Zn(2+) is required as a cofactor.

It is found in the secreted. It catalyses the reaction Preferential cleavage of bonds with hydrophobic residues in P1'.. This Dickeya chrysanthemi (Pectobacterium chrysanthemi) protein is Serralysin B (prtB).